The chain runs to 180 residues: ATP-dependent protease subunit HslV (180 aa).

T7 is an active-site residue. Residues G165, C168, and T171 each contribute to the Na(+) site.

It belongs to the peptidase T1B family. HslV subfamily. A double ring-shaped homohexamer of HslV is capped on each side by a ring-shaped HslU homohexamer. The assembly of the HslU/HslV complex is dependent on binding of ATP.

The protein resides in the cytoplasm. It catalyses the reaction ATP-dependent cleavage of peptide bonds with broad specificity.. With respect to regulation, allosterically activated by HslU binding. Protease subunit of a proteasome-like degradation complex believed to be a general protein degrading machinery. The polypeptide is ATP-dependent protease subunit HslV (Bacillus cereus (strain Q1)).